Consider the following 497-residue polypeptide: NADH-quinone oxidoreductase subunit N (497 aa).

13 helical membrane-spanning segments follow: residues 12 to 32 (MAPE…DLAL), 40 to 60 (PLAW…AAMI), 80 to 100 (AFKF…AEWA), 116 to 136 (LFAL…TLFV), 166 to 186 (VING…VFGL), 208 to 228 (LALA…TVPF), 240 to 260 (PVPA…ALLL), 284 to 304 (MQPI…VVAL), 316 to 336 (SGIA…WAMI), 341 to 361 (MYLL…AHIV), 383 to 403 (AAAL…AGFI), 430 to 450 (TVIS…RPTF), and 457 to 477 (LPAG…AIGW).

It belongs to the complex I subunit 2 family. In terms of assembly, NDH-1 is composed of 14 different subunits. Subunits NuoA, H, J, K, L, M, N constitute the membrane sector of the complex.

Its subcellular location is the cell membrane. The catalysed reaction is a quinone + NADH + 5 H(+)(in) = a quinol + NAD(+) + 4 H(+)(out). In terms of biological role, NDH-1 shuttles electrons from NADH, via FMN and iron-sulfur (Fe-S) centers, to quinones in the respiratory chain. The immediate electron acceptor for the enzyme in this species is believed to be a menaquinone. Couples the redox reaction to proton translocation (for every two electrons transferred, four hydrogen ions are translocated across the cytoplasmic membrane), and thus conserves the redox energy in a proton gradient. This Geobacillus kaustophilus (strain HTA426) protein is NADH-quinone oxidoreductase subunit N.